A 318-amino-acid polypeptide reads, in one-letter code: Beta-sarcoglycan (318 aa).

A disordered region spans residues 1–32; that stretch reads MAAAAAAAAEQQSSNGPVKKSMREKAVERRSV. Over 1–65 the chain is Cytoplasmic; sequence MAAAAAAAAE…GLRGRKGNLA (65 aa). Basic and acidic residues predominate over residues 21-32; the sequence is SMREKAVERRSV. Residues 66-86 form a helical; Signal-anchor for type II membrane protein membrane-spanning segment; sequence ICVIILLFILAVINLIITLVI. The Extracellular portion of the chain corresponds to 87–318; that stretch reads WAVIRIGPNG…ISDNPCGNTH (232 aa). Residues N158, N211, and N258 are each glycosylated (N-linked (GlcNAc...) asparagine). 2 disulfide bridges follow: C288-C314 and C290-C307.

The protein belongs to the sarcoglycan beta/delta/gamma/zeta family. In terms of assembly, cross-link to form 2 major subcomplexes: one consisting of SGCB, SGCD and SGCG and the other consisting of SGCB and SGCD. The association between SGCB and SGCG is particularly strong while SGCA is loosely associated with the other sarcoglycans. Post-translationally, disulfide bonds are present. Highest expression in heart and skeletal muscle. Low expression in brain, kidney, placenta, pancreas and lung. High expression in fetal brain. Also found in fetal lung, kidney and liver.

It is found in the cell membrane. It localises to the sarcolemma. The protein localises to the cytoplasm. Its subcellular location is the cytoskeleton. Component of the sarcoglycan complex, a subcomplex of the dystrophin-glycoprotein complex which forms a link between the F-actin cytoskeleton and the extracellular matrix. This Homo sapiens (Human) protein is Beta-sarcoglycan (SGCB).